A 200-amino-acid polypeptide reads, in one-letter code: Ribosome maturation factor RimM (200 aa).

Residues 103–181 enclose the PRC barrel domain; that stretch reads KEGEYYFYQL…KIVAKRLEYL (79 aa).

This sequence belongs to the RimM family. As to quaternary structure, binds ribosomal protein uS19.

It localises to the cytoplasm. An accessory protein needed during the final step in the assembly of 30S ribosomal subunit, possibly for assembly of the head region. Essential for efficient processing of 16S rRNA. May be needed both before and after RbfA during the maturation of 16S rRNA. It has affinity for free ribosomal 30S subunits but not for 70S ribosomes. The polypeptide is Ribosome maturation factor RimM (Kosmotoga olearia (strain ATCC BAA-1733 / DSM 21960 / TBF 19.5.1)).